The chain runs to 296 residues: LysM and putative peptidoglycan-binding domain-containing protein 4 (296 aa).

Residues 1–217 (MRHKELLSKT…PMDGADCGIQ (217 aa)) are Extracellular-facing. N-linked (GlcNAc...) asparagine glycosylation occurs at Asn30. One can recognise a LysM domain in the interval 74–118 (LQRELAQEDSLNKLALQYGCKVADIKKVNNFIREQDLYALKSIKS). Residues 218-238 (WWNAVFIMLLIGIVLPIFYLV) traverse the membrane as a helical segment. Residues 239–296 (YFKIQASGETPNSLNTAAIPNGSMAMGTVPGQAPRLAVAVPTVPSADSQFSQTTQAGN) are Cytoplasmic-facing.

It is found in the membrane. This Pongo abelii (Sumatran orangutan) protein is LysM and putative peptidoglycan-binding domain-containing protein 4 (LYSMD4).